A 465-amino-acid polypeptide reads, in one-letter code: Cysteine--tRNA ligase (465 aa).

C30 contacts Zn(2+). The 'HIGH' region signature appears at M32 to H42. C214, H239, and E243 together coordinate Zn(2+). Positions K271 to S275 match the 'KMSKS' region motif. Residue K274 participates in ATP binding.

The protein belongs to the class-I aminoacyl-tRNA synthetase family. In terms of assembly, monomer. Zn(2+) is required as a cofactor.

It localises to the cytoplasm. It catalyses the reaction tRNA(Cys) + L-cysteine + ATP = L-cysteinyl-tRNA(Cys) + AMP + diphosphate. The protein is Cysteine--tRNA ligase of Paraburkholderia xenovorans (strain LB400).